We begin with the raw amino-acid sequence, 466 residues long: Chromosomal replication initiator protein DnaA (466 aa).

The segment at 1–86 (MSLSLWQQCL…EVGTKPVTQT (86 aa)) is domain I, interacts with DnaA modulators. The tract at residues 86 to 129 (TLKTPVHNVVAPTQTTTAQPQRVAPAARSGWDNVPAPAEPTYRS) is domain II. Residues 130–346 (NVNVKHTFDN…GALNRVIANA (217 aa)) form a domain III, AAA+ region region. 4 residues coordinate ATP: Gly174, Gly176, Lys177, and Thr178. Residues 347–466 (NFTGRAITID…FSNLIRTLSS (120 aa)) form a domain IV, binds dsDNA region.

Belongs to the DnaA family. Oligomerizes as a right-handed, spiral filament on DNA at oriC.

Its subcellular location is the cytoplasm. Its function is as follows. Plays an essential role in the initiation and regulation of chromosomal replication. ATP-DnaA binds to the origin of replication (oriC) to initiate formation of the DNA replication initiation complex once per cell cycle. Binds the DnaA box (a 9 base pair repeat at the origin) and separates the double-stranded (ds)DNA. Forms a right-handed helical filament on oriC DNA; dsDNA binds to the exterior of the filament while single-stranded (ss)DNA is stabiized in the filament's interior. The ATP-DnaA-oriC complex binds and stabilizes one strand of the AT-rich DNA unwinding element (DUE), permitting loading of DNA polymerase. After initiation quickly degrades to an ADP-DnaA complex that is not apt for DNA replication. Binds acidic phospholipids. This Salmonella dublin (strain CT_02021853) protein is Chromosomal replication initiator protein DnaA.